Reading from the N-terminus, the 810-residue chain is MNTPQISLYEPGTILTVGSHHAKIIKYLTSGGFAQVYTAEISPPDPYSNANIACLKRVIVPHKQGLNTLRAEVDAMKLLRNNKHVVSYIDSHAARSVNGIAYEVFVLMEFCERGGLIDFMNTRLQNRLQESEILEIMSQTVQGITAMHALQPPLIHRDIKIENVLISHDGLYKVCDFGSVSGVIRPPRNTQEFNYVQHDILTNTTAQYRSPEMIDLYRGLPIDEKSDIWALGVFLYKICYYTTPFEKSGEAGILHARYQYPSFPQYSDRLKNLIRLMLMEAPSQRPNICQVLEEVSRLQNKPCPIRNFYLLRAMNQNANTQLAGEPSSTTYVPTQKFIPVQSLQSINQPPNMMPVTHVSTTPNLGTFPISINDNNKTEVTAHAGLQVGSHSNLTSPLMKTKSVPLSDEFASLYYKELHPFQKSQTFKSVESFQSPQRKSMPPLSLTPVNNDIFDRVSAINRPNNYVDSETQTIDNMAVPNLKLSPTITSKSLSSTKEIAAPDNINGSKIVRSLSSKLKKVITGESRGNSPIKSRQNTGDSIRSAFGKLRHGFTGNSVNNSRSASFDNNNVNGNGNNTNRRLVSSSTSSFPKFNSDTKRKEESDKNQRLEKRRSMPPSILSDFDQHERNNSRTGSRDYYRSHSPVKKTQASAKTTSKPTLIPDNGNVNINQEKKESIQRRVHNLLKSSDDPVTYKSASGYGKYTDIGTETSNRHSSVRITPITEEKFKKTLKDGVLDIKTKSNGKDKSRPPRPPPKPLHLRTEIQKIRNFSRLQSKKLPIERISSEATETIVDVNVDDLEADFRKRFPSKV.

The Protein kinase domain maps to 22 to 298 (AKIIKYLTSG…CQVLEEVSRL (277 aa)). ATP contacts are provided by residues 28–36 (LTSGGFAQV) and Lys56. Residue Asp158 is the Proton acceptor of the active site. Phosphoserine is present on residues Ser402, Ser428, and Ser484. 2 disordered regions span residues 552–668 (FTGN…NVNI) and 733–761 (GVLD…HLRT). Thr553 is modified (phosphothreonine). Positions 553–566 (TGNSVNNSRSASFD) are enriched in polar residues. At Ser556 the chain carries Phosphoserine. Over residues 567–588 (NNNVNGNGNNTNRRLVSSSTSS) the composition is skewed to low complexity. Basic and acidic residues-rich tracts occupy residues 594–612 (SDTK…EKRR) and 622–639 (FDQH…DYYR). Low complexity predominate over residues 645–658 (KKTQASAKTTSKPT). Residues 733–748 (GVLDIKTKSNGKDKSR) show a composition bias toward basic and acidic residues. Positions 743–756 (GKDKSRPPRPPPKP) are interaction with SH3 domain of ABP1.

The protein belongs to the protein kinase superfamily. Ser/Thr protein kinase family. Interacts with ABP1, which is required for proper actin patch localization.

The protein localises to the cytoplasm. Its subcellular location is the cytoskeleton. It is found in the actin patch. It carries out the reaction L-seryl-[protein] + ATP = O-phospho-L-seryl-[protein] + ADP + H(+). It catalyses the reaction L-threonyl-[protein] + ATP = O-phospho-L-threonyl-[protein] + ADP + H(+). Protein kinase involved in the regulation of actin cytoskeleton organization and endocytosis. Phosphorylates PAN1 which disrupts the interaction between PAN1 and END3, and between PAN1 and SLA1. Phosphorylates SCD5. Preferentially, phosphorylates substrates on threonine residues in a [L/I/V/M]-x-x-[Q/N/T/S]-x-T-G motif. The polypeptide is Actin-regulating kinase PRK1 (PRK1) (Saccharomyces cerevisiae (strain ATCC 204508 / S288c) (Baker's yeast)).